Consider the following 1307-residue polypeptide: Rab3 GTPase-activating protein regulatory subunit (1307 aa).

Belongs to the Rab3-GAP regulatory subunit family. In terms of assembly, the Rab3 GTPase-activating complex is a heterodimer composed of rbg-1 and rbg-2.

It localises to the cytoplasm. Its function is as follows. Probable regulatory subunit of a GTPase activating protein that has specificity for Rab3 subfamily. Rab3 proteins are involved in regulated exocytosis of neurotransmitters and hormones. Rab3 GTPase-activating complex specifically converts active Rab3-GTP to the inactive form Rab3-GDP. In Caenorhabditis elegans, this protein is Rab3 GTPase-activating protein regulatory subunit (rbg-2).